A 2429-amino-acid chain; its full sequence is Highly reducing polyketide synthase acrA (2429 aa).

One can recognise a Ketosynthase family 3 (KS3) domain in the interval 4 to 436 (PEPIAIVGMG…GTNAHAIIES (433 aa)). Active-site for beta-ketoacyl synthase activity residues include C177, H314, and H356. Residues 541–861 (VFTGQGAQWP…PYSGTLSRGQ (321 aa)) form a malonyl-CoA:ACP transacylase (MAT) domain region. The N-terminal hotdog fold stretch occupies residues 931–1068 (HPLLGVRSTE…GTVRVVLGPA (138 aa)). Positions 931–1229 (HPLLGVRSTE…RCSSLTPPGP (299 aa)) are dehydratase (DH) domain. A PKS/mFAS DH domain is found at 931-1230 (HPLLGVRSTE…CSSLTPPGPR (300 aa)). H963 (proton acceptor; for dehydratase activity) is an active-site residue. The segment at 1082–1230 (VFHEVKTERF…CSSLTPPGPR (149 aa)) is C-terminal hotdog fold. D1141 acts as the Proton donor; for dehydratase activity in catalysis. Positions 1388–1577 (NGYMGRVAGQ…VNDFVDESKY (190 aa)) are methyltransferase (MT) domain. The segment at 2065–2235 (TYLLVGCTGG…ARGLAASVFH (171 aa)) is ketoreductase (KR) domain. Residues 2351 to 2428 (EVDGVIQEAF…ELCREAASEV (78 aa)) enclose the Carrier domain. S2388 bears the O-(pantetheine 4'-phosphoryl)serine mark.

The protein operates within secondary metabolite biosynthesis. Highly reducing polyketide synthase; part of the cluster that mediates the biosynthesis of acurin A, a highly reduced polyketide coupled to a serine via a peptide bond. The activities of the highly reducing polyketide synthase acrA and the nonribosomal peptide synthetase acrB are collectively responsible for the synthesis of the acurin A core structure with a heptaketide backbone produced by acrA covalently fused to a L-serine by acrB. After the formation of the PK-NRP hybrid product, it is detached from acrB by reductive release to set up the formation of the lactam ring by aldol condensation. The hydrolyase acrC then catalyzes water loss to generate a double bond in the ring. This double bond is probably reduced, which is followed by three oxidations at C-22 to generate the carboxylic acid moiety, involving probably the FAD-binding monooxygenase acrE and the cytochrome P450 monooxygenases acrD and acrF. Finally, a last methylation step performed by the O-methyltransferase acrG leads to the production of acurin A. This chain is Highly reducing polyketide synthase acrA, found in Aspergillus aculeatus (strain ATCC 16872 / CBS 172.66 / WB 5094).